Here is a 91-residue protein sequence, read N- to C-terminus: Elongation factor 1-beta (91 aa).

The protein belongs to the EF-1-beta/EF-1-delta family.

In terms of biological role, promotes the exchange of GDP for GTP in EF-1-alpha/GDP, thus allowing the regeneration of EF-1-alpha/GTP that could then be used to form the ternary complex EF-1-alpha/GTP/AAtRNA. In Thermococcus onnurineus (strain NA1), this protein is Elongation factor 1-beta.